Consider the following 141-residue polypeptide: Hemoglobin subunit alpha (141 aa).

The Globin domain maps to 1-141 (VLSSKDKANI…VSTVLTSKYR (141 aa)). Residue Ser-3 is modified to Phosphoserine. Lys-7 and Lys-11 each carry N6-succinyllysine. Lys-16 bears the N6-acetyllysine; alternate mark. Lys-16 bears the N6-succinyllysine; alternate mark. Residue Tyr-24 is modified to Phosphotyrosine. The residue at position 40 (Lys-40) is an N6-succinyllysine. Ser-49 is subject to Phosphoserine. Position 58 (His-58) interacts with O2. His-87 is a heme b binding site. Ser-102 carries the post-translational modification Phosphoserine. Thr-108 carries the post-translational modification Phosphothreonine. Ser-124 bears the Phosphoserine mark. A phosphothreonine mark is found at Thr-134 and Thr-137. Ser-138 carries the post-translational modification Phosphoserine.

This sequence belongs to the globin family. As to quaternary structure, heterotetramer of two alpha chains and two beta chains. Red blood cells.

Functionally, involved in oxygen transport from the lung to the various peripheral tissues. Hemopressin acts as an antagonist peptide of the cannabinoid receptor CNR1. Hemopressin-binding efficiently blocks cannabinoid receptor CNR1 and subsequent signaling. This chain is Hemoglobin subunit alpha (HBA), found in Vicugna pacos (Alpaca).